The primary structure comprises 292 residues: NAD kinase (292 aa).

The Proton acceptor role is filled by D73. NAD(+)-binding positions include 73–74 (DG), 147–148 (NE), H158, R175, D177, 188–193 (TAYSLS), and Q247.

Belongs to the NAD kinase family. A divalent metal cation serves as cofactor.

Its subcellular location is the cytoplasm. It catalyses the reaction NAD(+) + ATP = ADP + NADP(+) + H(+). Functionally, involved in the regulation of the intracellular balance of NAD and NADP, and is a key enzyme in the biosynthesis of NADP. Catalyzes specifically the phosphorylation on 2'-hydroxyl of the adenosine moiety of NAD to yield NADP. This chain is NAD kinase, found in Escherichia coli O7:K1 (strain IAI39 / ExPEC).